Here is an 83-residue protein sequence, read N- to C-terminus: UPF0297 protein DSY2420 (83 aa).

It belongs to the UPF0297 family.

This Desulfitobacterium hafniense (strain Y51) protein is UPF0297 protein DSY2420.